Consider the following 388-residue polypeptide: Chaperone protein DnaJ 1 (388 aa).

One can recognise a J domain in the interval 10 to 74 (DFYKELGVSS…VKRKEYDETR (65 aa)). The segment at 159 to 237 (GVAMPLRLTS…CKGTGVTTRT (79 aa)) adopts a CR-type zinc-finger fold. Zn(2+) contacts are provided by Cys172, Cys175, Cys189, Cys192, Cys211, Cys214, Cys225, and Cys228. CXXCXGXG motif repeat units lie at residues 172 to 179 (CTNCHGSG), 189 to 196 (CSTCNGSG), 211 to 218 (CTECRGSG), and 225 to 232 (CEECKGTG).

This sequence belongs to the DnaJ family. As to quaternary structure, homodimer. Zn(2+) is required as a cofactor.

The protein resides in the cytoplasm. Participates actively in the response to hyperosmotic and heat shock by preventing the aggregation of stress-denatured proteins and by disaggregating proteins, also in an autonomous, DnaK-independent fashion. Unfolded proteins bind initially to DnaJ; upon interaction with the DnaJ-bound protein, DnaK hydrolyzes its bound ATP, resulting in the formation of a stable complex. GrpE releases ADP from DnaK; ATP binding to DnaK triggers the release of the substrate protein, thus completing the reaction cycle. Several rounds of ATP-dependent interactions between DnaJ, DnaK and GrpE are required for fully efficient folding. Also involved, together with DnaK and GrpE, in the DNA replication of plasmids through activation of initiation proteins. The sequence is that of Chaperone protein DnaJ 1 from Mycobacterium leprae (strain TN).